The sequence spans 432 residues: Trigger factor (432 aa).

A PPIase FKBP-type domain is found at Glu-161–Pro-246.

It belongs to the FKBP-type PPIase family. Tig subfamily. Homodimer and monomer. In vivo most of the ribosomes are in complex with monomeric TF. Uncomplexed TF, however, is in a monomer-dimer equilibrium with approximately two thirds of TF existing in a dimeric state.

It localises to the cytoplasm. The enzyme catalyses [protein]-peptidylproline (omega=180) = [protein]-peptidylproline (omega=0). Involved in protein export. Acts as a chaperone by maintaining the newly synthesized protein in an open conformation. Functions as a peptidyl-prolyl cis-trans isomerase. This Escherichia coli O127:H6 (strain E2348/69 / EPEC) protein is Trigger factor.